The following is a 689-amino-acid chain: Protein asunder (689 aa).

A coiled-coil region spans residues 521-550; that stretch reads NGARLKLSKAKDQYRLLYRELEQLIQLNAT. Disordered stretches follow at residues 591 to 619 and 665 to 689; these read SPERLEPISSVGASGSSNSNSLLKASKRR and GTKDKDAVTTGASITPNVKEESVRS. Residues 599-614 are compositionally biased toward low complexity; sequence SSVGASGSSNSNSLLK. Residues 613-619 carry the Nuclear localization signal (NLS) motif; that stretch reads LKASKRR.

This sequence belongs to the Integrator subunit 13 family. As to quaternary structure, belongs to the multiprotein complex Integrator, at least composed of IntS1, IntS2, IntS3, IntS4, omd/IntS5, IntS6, defl/IntS7, IntS8, IntS9, IntS10, IntS11, IntS12, asun/IntS13, IntS14 and IntS15. The core complex associates with protein phosphatase 2A subunits mts/PP2A and Pp2A-29B, to form the Integrator-PP2A (INTAC) complex. In terms of processing, phosphorylated.

The protein resides in the nucleus. It is found in the cytoplasm. It localises to the perinuclear region. Its function is as follows. Component of the integrator complex, a multiprotein complex that terminates RNA polymerase II (Pol II) transcription in the promoter-proximal region of genes. The integrator complex provides a quality checkpoint during transcription elongation by driving premature transcription termination of transcripts that are unfavorably configured for transcriptional elongation: the complex terminates transcription by (1) catalyzing dephosphorylation of the C-terminal domain (CTD) of Pol II subunit Polr2A/Rbp1 and Spt5, and (2) degrading the exiting nascent RNA transcript via endonuclease activity. The integrator complex is also involved in the 3'-end processing of the U7 snRNA, and also the spliceosomal snRNAs U1, U2, U4 and U5. This chain is Protein asunder (asun), found in Drosophila sechellia (Fruit fly).